Reading from the N-terminus, the 342-residue chain is Glucokinase (342 aa).

An ATP-binding site is contributed by 18 to 23 (GDIGGT).

This sequence belongs to the bacterial glucokinase family.

The protein localises to the cytoplasm. It catalyses the reaction D-glucose + ATP = D-glucose 6-phosphate + ADP + H(+). The chain is Glucokinase from Chelativorans sp. (strain BNC1).